The sequence spans 290 residues: Acetyl-coenzyme A carboxylase carboxyl transferase subunit beta (290 aa).

Residues leucine 27 to alanine 290 form the CoA carboxyltransferase N-terminal domain. 4 residues coordinate Zn(2+): cysteine 31, cysteine 34, cysteine 50, and cysteine 53. The segment at cysteine 31 to cysteine 53 adopts a C4-type zinc-finger fold.

This sequence belongs to the AccD/PCCB family. As to quaternary structure, acetyl-CoA carboxylase is a heterohexamer composed of biotin carboxyl carrier protein (AccB), biotin carboxylase (AccC) and two subunits each of ACCase subunit alpha (AccA) and ACCase subunit beta (AccD). Zn(2+) is required as a cofactor.

It localises to the cytoplasm. The catalysed reaction is N(6)-carboxybiotinyl-L-lysyl-[protein] + acetyl-CoA = N(6)-biotinyl-L-lysyl-[protein] + malonyl-CoA. It participates in lipid metabolism; malonyl-CoA biosynthesis; malonyl-CoA from acetyl-CoA: step 1/1. Its function is as follows. Component of the acetyl coenzyme A carboxylase (ACC) complex. Biotin carboxylase (BC) catalyzes the carboxylation of biotin on its carrier protein (BCCP) and then the CO(2) group is transferred by the transcarboxylase to acetyl-CoA to form malonyl-CoA. The protein is Acetyl-coenzyme A carboxylase carboxyl transferase subunit beta of Burkholderia multivorans (strain ATCC 17616 / 249).